Reading from the N-terminus, the 144-residue chain is Subtilisin inhibitor (144 aa).

Low complexity predominate over residues 1–12; that stretch reads MRNTGAGPSPSV. The disordered stretch occupies residues 1–25; the sequence is MRNTGAGPSPSVSRPPPSAAPLSGA. The N-terminal stretch at 1 to 31 is a signal peptide; it reads MRNTGAGPSPSVSRPPPSAAPLSGAALAAPG. 2 consecutive repeats follow at residues 33 to 37 and 39 to 43; these read APSAL. Intrachain disulfides connect Cys66/Cys81 and Cys102/Cys132.

This sequence belongs to the protease inhibitor I16 (SSI) family. Homodimer.

The protein resides in the secreted. In terms of biological role, strong inhibitor of bacterial serine proteases such as subtilisin. The polypeptide is Subtilisin inhibitor (ssi) (Streptomyces albogriseolus).